A 303-amino-acid chain; its full sequence is Peroxisomal trans-2-enoyl-CoA reductase (303 aa).

Residue 23–47 (VTGGATGIGKAIVKELLELGSNVVI) participates in NADP(+) binding. Position 32 is an N6-succinyllysine (Lys-32). Position 49 is a phosphoserine (Ser-49). Tyr-179 functions as the Proton acceptor in the catalytic mechanism. Tyr-179 is modified (phosphotyrosine). The Microbody targeting signal signature appears at 301 to 303 (AKL).

This sequence belongs to the short-chain dehydrogenases/reductases (SDR) family. As to quaternary structure, interacts with PEX5, probably required to target it into peroxisomes.

It is found in the peroxisome. It catalyses the reaction a (2E)-enoyl-CoA + NADPH + H(+) = a 2,3-saturated acyl-CoA + NADP(+). The catalysed reaction is (2E)-decenoyl-CoA + NADPH + H(+) = decanoyl-CoA + NADP(+). It carries out the reaction (2E)-hexenoyl-CoA + NADPH + H(+) = hexanoyl-CoA + NADP(+). The enzyme catalyses (2E)-octenoyl-CoA + NADPH + H(+) = octanoyl-CoA + NADP(+). It catalyses the reaction (2E)-dodecenoyl-CoA + NADPH + H(+) = dodecanoyl-CoA + NADP(+). The catalysed reaction is (2E)-tetradecenoyl-CoA + NADPH + H(+) = tetradecanoyl-CoA + NADP(+). It functions in the pathway lipid metabolism; fatty acid biosynthesis. In terms of biological role, participates in chain elongation of fatty acids. Catalyzes the reduction of trans-2-enoyl-CoAs of varying chain lengths from 6:1 to 16:1, having maximum activity with 10:1 CoA. Has no 2,4-dienoyl-CoA reductase activity. The chain is Peroxisomal trans-2-enoyl-CoA reductase from Homo sapiens (Human).